The following is a 325-amino-acid chain: Probable ABC transporter permease YtrD (325 aa).

8 helical membrane passes run 16–36, 63–83, 113–133, 146–166, 179–199, 233–253, 272–292, and 298–318; these read VALV…ILNM, SSFI…QLGI, MVIV…IMLL, LGMI…GALT, VAIS…ILFG, YLVI…ISFV, PVQI…GFTA, and GYLI…YFAI.

This sequence belongs to the ABC-5 integral membrane protein family. In terms of assembly, the complex is composed of 2 ATP-binding proteins (YtrB and YtrE), 2 transmembrane proteins (YtrC and YtrD) and a solute-binding protein (YtrF).

The protein resides in the cell membrane. Its function is as follows. Part of the ABC transporter complex YtrBCDEF that plays a role in acetoin utilization during stationary phase and sporulation. The sequence is that of Probable ABC transporter permease YtrD (ytrD) from Bacillus subtilis (strain 168).